A 119-amino-acid chain; its full sequence is Ribosome-binding factor A (119 aa).

Belongs to the RbfA family. Monomer. Binds 30S ribosomal subunits, but not 50S ribosomal subunits or 70S ribosomes.

It is found in the cytoplasm. Its function is as follows. One of several proteins that assist in the late maturation steps of the functional core of the 30S ribosomal subunit. Associates with free 30S ribosomal subunits (but not with 30S subunits that are part of 70S ribosomes or polysomes). Required for efficient processing of 16S rRNA. May interact with the 5'-terminal helix region of 16S rRNA. The chain is Ribosome-binding factor A from Buchnera aphidicola subsp. Acyrthosiphon pisum (strain Tuc7).